The chain runs to 430 residues: tRNA(Ile)-lysidine synthase (430 aa).

27 to 32 (SGGSDS) is an ATP binding site.

This sequence belongs to the tRNA(Ile)-lysidine synthase family.

It localises to the cytoplasm. It carries out the reaction cytidine(34) in tRNA(Ile2) + L-lysine + ATP = lysidine(34) in tRNA(Ile2) + AMP + diphosphate + H(+). Functionally, ligates lysine onto the cytidine present at position 34 of the AUA codon-specific tRNA(Ile) that contains the anticodon CAU, in an ATP-dependent manner. Cytidine is converted to lysidine, thus changing the amino acid specificity of the tRNA from methionine to isoleucine. In Rickettsia bellii (strain RML369-C), this protein is tRNA(Ile)-lysidine synthase.